The sequence spans 452 residues: tRNA-2-methylthio-N(6)-dimethylallyladenosine synthase (452 aa).

Residues 16–134 (KRFFISTWGC…LPEYIERVKT (119 aa)) form the MTTase N-terminal domain. [4Fe-4S] cluster contacts are provided by Cys-25, Cys-61, Cys-95, Cys-171, Cys-175, and Cys-178. The region spanning 157-387 (RKSDIKAFVT…VEAVNEIMAR (231 aa)) is the Radical SAM core domain. The region spanning 390-452 (KEFEGKTVEV…NSFSLTGEII (63 aa)) is the TRAM domain.

It belongs to the methylthiotransferase family. MiaB subfamily. In terms of assembly, monomer. It depends on [4Fe-4S] cluster as a cofactor.

Its subcellular location is the cytoplasm. The catalysed reaction is N(6)-dimethylallyladenosine(37) in tRNA + (sulfur carrier)-SH + AH2 + 2 S-adenosyl-L-methionine = 2-methylsulfanyl-N(6)-dimethylallyladenosine(37) in tRNA + (sulfur carrier)-H + 5'-deoxyadenosine + L-methionine + A + S-adenosyl-L-homocysteine + 2 H(+). Its function is as follows. Catalyzes the methylthiolation of N6-(dimethylallyl)adenosine (i(6)A), leading to the formation of 2-methylthio-N6-(dimethylallyl)adenosine (ms(2)i(6)A) at position 37 in tRNAs that read codons beginning with uridine. This chain is tRNA-2-methylthio-N(6)-dimethylallyladenosine synthase, found in Clostridium novyi (strain NT).